Here is a 115-residue protein sequence, read N- to C-terminus: Anamorsin homolog 2 (115 aa).

A disordered region spans residues 30-115 (VKEATKGEDC…KVKLNLTDDI (86 aa)). 4 residues coordinate [2Fe-2S] cluster: Cys39, Cys46, Cys49, and Cys51. The tract at residues 39-51 (CTTRRRACKNCTC) is fe-S binding site A. [4Fe-4S] cluster is bound by residues Cys77, Cys80, Cys88, and Cys91. 2 consecutive short sequence motifs (cx2C motif) follow at residues 77–80 (CGNC) and 88–91 (CATC). Residues 77–91 (CGNCAKGDAFRCATC) form a fe-S binding site B region.

It belongs to the anamorsin family. Monomer. The cofactor is [2Fe-2S] cluster. Requires [4Fe-4S] cluster as cofactor.

The protein localises to the cytoplasm. Its subcellular location is the mitochondrion intermembrane space. Its function is as follows. Component of the cytosolic iron-sulfur (Fe-S) protein assembly (CIA) machinery. Required for the maturation of extramitochondrial Fe-S proteins. Part of an electron transfer chain functioning in an early step of cytosolic Fe-S biogenesis, facilitating the de novo assembly of a [4Fe-4S] cluster on the cytosolic Fe-S scaffold complex. Electrons are transferred from NADPH via a FAD- and FMN-containing diflavin oxidoreductase. Together with the diflavin oxidoreductase, also required for the assembly of the diferric tyrosyl radical cofactor of ribonucleotide reductase (RNR), probably by providing electrons for reduction during radical cofactor maturation in the catalytic small subunit. This chain is Anamorsin homolog 2, found in Trypanosoma cruzi (strain CL Brener).